Here is a 595-residue protein sequence, read N- to C-terminus: Tumor necrosis factor receptor superfamily member 8 (595 aa).

An N-terminal signal peptide occupies residues 1-18; sequence MRVLLAALGLLFLGALRA. Over 19–385 the chain is Extracellular; the sequence is FPQDRPFEDT…STGKPVLDAG (367 aa). 3 TNFR-Cys repeats span residues 28–66, 68–106, and 107–150; these read TCHGNPSHYYDKAVRRCCYRCPMGLFPTQQCPQRPTDCR, QCEPDYYLDEADRCTACVTCSRDDLVEKTPCAWNSSRVC, and ECRP…TVCE. 8 disulfide bridges follow: C29-C44, C45-C58, C48-C65, C69-C81, C84-C98, C87-C106, C108-C122, and C131-C149. N32 carries N-linked (GlcNAc...) asparagine glycosylation. The N-linked (GlcNAc...) asparagine glycan is linked to N101. Positions 167-238 are disordered; the sequence is KEPSSGTIPQ…PTQPCPEGSG (72 aa). The span at 179-194 shows a compositional bias: low complexity; the sequence is PTPVSPATSSASTMPV. TNFR-Cys repeat units lie at residues 205 to 241, 243 to 281, and 282 to 325; these read ASKLTRAPDSPSSVGRPSSDPGLSPTQPCPEGSGDCR, QCEPDYYLDEAGRCTACVSCSRDDLVEKTPCAWNSSRTC, and ECRP…TTFE. Disulfide bonds link C233/C240, C244/C256, C259/C273, C262/C281, C283/C297, and C289/C300. A glycan (N-linked (GlcNAc...) asparagine) is linked at N276. The disordered stretch occupies residues 323–355; sequence TFEAPPLGTQPDCNPTPENGEAPASTSPTQSLL. Residue N336 is glycosylated (N-linked (GlcNAc...) asparagine). A compositionally biased stretch (polar residues) spans 346 to 355; the sequence is ASTSPTQSLL. A helical transmembrane segment spans residues 386–406; the sequence is PVLFWVILVLVVVVGSSAFLL. Over 407–595 the chain is Cytoplasmic; that stretch reads CHRRACRKRI…DPLPTAASGK (189 aa). Phosphoserine is present on residues S438 and S452. Disordered regions lie at residues 438-457, 485-509, and 536-595; these read SRPRRSSTQLRSGASVTEPV, LQDASPAGGPSSPRDLPEPRVSTEH, and EGRG…ASGK. Residues 443–452 show a composition bias toward polar residues; the sequence is SSTQLRSGAS. A compositionally biased stretch (basic and acidic residues) spans 499–509; sequence DLPEPRVSTEH.

The protein belongs to the TNFR8 family. As to quaternary structure, interacts with TRAF1, TRAF2, TRAF3 and TRAF5. In terms of processing, phosphorylated on serine and tyrosine residues. Isoform 2 is constitutively phosphorylated. As to expression, detected in alveolar macrophages (at protein level).

The protein localises to the cell membrane. It localises to the cytoplasm. Functionally, receptor for TNFSF8/CD30L. May play a role in the regulation of cellular growth and transformation of activated lymphoblasts. Regulates gene expression through activation of NF-kappa-B. The polypeptide is Tumor necrosis factor receptor superfamily member 8 (Homo sapiens (Human)).